We begin with the raw amino-acid sequence, 217 residues long: ATP phosphoribosyltransferase (217 aa).

The protein belongs to the ATP phosphoribosyltransferase family. Short subfamily. As to quaternary structure, heteromultimer composed of HisG and HisZ subunits.

The protein localises to the cytoplasm. The enzyme catalyses 1-(5-phospho-beta-D-ribosyl)-ATP + diphosphate = 5-phospho-alpha-D-ribose 1-diphosphate + ATP. The protein operates within amino-acid biosynthesis; L-histidine biosynthesis; L-histidine from 5-phospho-alpha-D-ribose 1-diphosphate: step 1/9. Catalyzes the condensation of ATP and 5-phosphoribose 1-diphosphate to form N'-(5'-phosphoribosyl)-ATP (PR-ATP). Has a crucial role in the pathway because the rate of histidine biosynthesis seems to be controlled primarily by regulation of HisG enzymatic activity. The polypeptide is ATP phosphoribosyltransferase (Syntrophomonas wolfei subsp. wolfei (strain DSM 2245B / Goettingen)).